The following is a 242-amino-acid chain: MAGKLKPLNVEAPEATEEAEGQAKSLKTEDLLAMVIKLQKEGSLEPQIEDLISRINDLQQAKKKSSEELRETHSLWEALHRELDSLNGEKVHLEEVLGKKQEALRILQMHCQEKESEAQRLDVRGQLEDLMGQHKDLWEFHMLEQRLAREIRALERSKEQLLSERRLVRAKLREVERRLHSPPEVEGAMAVNDGLKAELEIFGEQVRSAPEVGAGEGEAGPELPRARDEEDPEPPVAAPDAL.

The segment at 1-24 is disordered; the sequence is MAGKLKPLNVEAPEATEEAEGQAK. A coiled-coil region spans residues 44 to 181; the sequence is LEPQIEDLIS…LREVERRLHS (138 aa). The interval 206–242 is disordered; the sequence is VRSAPEVGAGEGEAGPELPRARDEEDPEPPVAAPDAL.

This sequence belongs to the SYCE family.

May be involved in meiosis. The sequence is that of Synaptonemal complex central element protein 1-like (SYCE1L) from Homo sapiens (Human).